A 595-amino-acid polypeptide reads, in one-letter code: uncharacterized protein (595 aa).

The first 23 residues, 1-23 (MLSLSSPPWLLLLVLFFFANGSA), serve as a signal peptide directing secretion. Residues Asn31, Asn63, Asn88, Asn112, Asn144, Asn187, Asn205, Asn389, Asn480, Asn492, and Asn506 are each glycosylated (N-linked (GlcNAc...) asparagine). The span at 61 to 83 (LENQTASSSNLNTNNEASDEQTG) shows a compositional bias: polar residues. Disordered stretches follow at residues 61–119 (LENQ…VSSL) and 141–164 (TALNGSGTPPEHQTIGQAPPTKGE). Over residues 84 to 119 (NSNSNTSSHSRNINGLPSSNSNIDNANSNSSSVSSL) the composition is skewed to low complexity.

The protein resides in the secreted. This is an uncharacterized protein from Drosophila melanogaster (Fruit fly).